A 647-amino-acid chain; its full sequence is Exoribonuclease 2 (647 aa).

Residues 192–520 (REDLTALSFV…NHRLLKAIIS (329 aa)) form the RNB domain. Residues 565–647 (ESTFNAEIID…ETRNIVARPI (83 aa)) enclose the S1 motif domain.

Belongs to the RNR ribonuclease family. RNase II subfamily.

It is found in the cytoplasm. It catalyses the reaction Exonucleolytic cleavage in the 3'- to 5'-direction to yield nucleoside 5'-phosphates.. Involved in mRNA degradation. Hydrolyzes single-stranded polyribonucleotides processively in the 3' to 5' direction. The chain is Exoribonuclease 2 from Proteus mirabilis (strain HI4320).